A 224-amino-acid polypeptide reads, in one-letter code: ATP phosphoribosyltransferase (224 aa).

Belongs to the ATP phosphoribosyltransferase family. Short subfamily. Heteromultimer composed of HisG and HisZ subunits.

It is found in the cytoplasm. The enzyme catalyses 1-(5-phospho-beta-D-ribosyl)-ATP + diphosphate = 5-phospho-alpha-D-ribose 1-diphosphate + ATP. Its pathway is amino-acid biosynthesis; L-histidine biosynthesis; L-histidine from 5-phospho-alpha-D-ribose 1-diphosphate: step 1/9. Its function is as follows. Catalyzes the condensation of ATP and 5-phosphoribose 1-diphosphate to form N'-(5'-phosphoribosyl)-ATP (PR-ATP). Has a crucial role in the pathway because the rate of histidine biosynthesis seems to be controlled primarily by regulation of HisG enzymatic activity. This Cupriavidus pinatubonensis (strain JMP 134 / LMG 1197) (Cupriavidus necator (strain JMP 134)) protein is ATP phosphoribosyltransferase.